A 192-amino-acid chain; its full sequence is Peptidyl-tRNA hydrolase (192 aa).

Tyr-18 serves as a coordination point for tRNA. His-23 (proton acceptor) is an active-site residue. TRNA contacts are provided by Phe-69, Asn-71, and Asn-117.

The protein belongs to the PTH family. In terms of assembly, monomer.

The protein localises to the cytoplasm. It carries out the reaction an N-acyl-L-alpha-aminoacyl-tRNA + H2O = an N-acyl-L-amino acid + a tRNA + H(+). In terms of biological role, hydrolyzes ribosome-free peptidyl-tRNAs (with 1 or more amino acids incorporated), which drop off the ribosome during protein synthesis, or as a result of ribosome stalling. Functionally, catalyzes the release of premature peptidyl moieties from peptidyl-tRNA molecules trapped in stalled 50S ribosomal subunits, and thus maintains levels of free tRNAs and 50S ribosomes. The chain is Peptidyl-tRNA hydrolase from Neisseria meningitidis serogroup B (strain ATCC BAA-335 / MC58).